We begin with the raw amino-acid sequence, 138 residues long: Thyrotropin subunit beta (138 aa).

Residues Met-1–Ser-20 form the signal peptide. 6 disulfides stabilise this stretch: Cys-22/Cys-72, Cys-36/Cys-87, Cys-39/Cys-125, Cys-47/Cys-103, Cys-51/Cys-105, and Cys-108/Cys-115. The N-linked (GlcNAc...) asparagine glycan is linked to Asn-43. The propeptide occupies Val-133 to Ile-138.

The protein belongs to the glycoprotein hormones subunit beta family. In terms of assembly, heterodimer of a common alpha chain and a unique beta chain which confers biological specificity to thyrotropin, lutropin, follitropin and gonadotropin.

The protein localises to the secreted. Functionally, indispensable for the control of thyroid structure and metabolism. The chain is Thyrotropin subunit beta (TSHB) from Sus scrofa (Pig).